The chain runs to 256 residues: tRNA pseudouridine synthase A (256 aa).

Catalysis depends on D49, which acts as the Nucleophile. Y104 contacts substrate.

It belongs to the tRNA pseudouridine synthase TruA family.

The catalysed reaction is uridine(38/39/40) in tRNA = pseudouridine(38/39/40) in tRNA. In terms of biological role, formation of pseudouridine at positions 38, 39 and 40 in the anticodon stem and loop of transfer RNAs. In Methanopyrus kandleri (strain AV19 / DSM 6324 / JCM 9639 / NBRC 100938), this protein is tRNA pseudouridine synthase A.